A 666-amino-acid chain; its full sequence is Non-receptor tyrosine-protein kinase TNK1 (666 aa).

The residue at position 96 (Ser-96) is a Phosphoserine. The Protein kinase domain occupies 116–383 (VRRGELLGSG…LEGLLQEAWL (268 aa)). ATP contacts are provided by residues 122–130 (LGSGCFGVV) and Lys-148. Residue Asp-245 is the Proton acceptor of the active site. At Ser-255 the chain carries Phosphoserine. The SH3 domain occupies 381–441 (AWLSEGRCVR…PASAVTLADL (61 aa)). The disordered stretch occupies residues 442–589 (GGSPVTHPAH…VPSGGPLSDP (148 aa)). A compositionally biased stretch (basic and acidic residues) spans 457–473 (HGEKCRGGTDGDREKAT). Ser-498 bears the Phosphoserine mark. Phosphothreonine is present on Thr-510. Phosphoserine is present on Ser-515. The span at 531-544 (DLPPRPPDLPPRPP) shows a compositional bias: pro residues. Ser-582 carries the phosphoserine modification.

The protein belongs to the protein kinase superfamily. Tyr protein kinase family. In terms of assembly, interacts with the SH3 domain of PLCG1 via its Pro-rich domain. In terms of processing, autophosphorylated on tyrosine residues. Expressed in whole embryo and all adult tissues examined including liver, kidney, heart, brain, skeletal muscle and intestine. Also detected in various myeloid- and lymphoid-derived cell lines.

The protein localises to the membrane. Its subcellular location is the cytoplasm. It catalyses the reaction L-tyrosyl-[protein] + ATP = O-phospho-L-tyrosyl-[protein] + ADP + H(+). In terms of biological role, may function in signaling pathways utilized broadly during fetal development and more selectively in adult tissues and in cells of the lymphohematopoietic system. Could specifically be involved in phospholipid signal transduction. Involved in negative regulation of cell growth. Has tumor suppressor properties. Plays a negative regulatory role in the Ras-MAPK pathway. In Mus musculus (Mouse), this protein is Non-receptor tyrosine-protein kinase TNK1.